The sequence spans 529 residues: Beta-hexosaminidase subunit alpha (529 aa).

A signal peptide spans methionine 1–alanine 22. The propeptide occupies leucine 23–histidine 88. Cysteine 58 and cysteine 104 are joined by a disulfide. Residues asparagine 115, asparagine 157, and asparagine 295 are each glycosylated (N-linked (GlcNAc...) asparagine). A disulfide bridge connects residues cysteine 277 and cysteine 328. Residue glutamate 323 is the Proton donor of the active site. The tract at residues asparagine 423–histidine 424 is critical for hydrolysis GM2 gangliosides. Cysteine 505 and cysteine 522 are joined by a disulfide.

It belongs to the glycosyl hydrolase 20 family. In terms of assembly, there are 3 beta-hexosaminidase isozymes: isozyme A (hexosaminidase A) is a heterodimer composed of one subunit alpha and one subunit beta (chain A and B); isozyme B (hexosaminidase B) is a homodimer of two beta subunits (two chains A and B); isozyme S (hexosaminidase S) is a homodimer of two alpha subunits. The composition of the dimer (isozyme A versus isozyme S) has a significant effect on the substrate specificity of the alpha subunit active site.

The protein resides in the lysosome. The catalysed reaction is Hydrolysis of terminal non-reducing N-acetyl-D-hexosamine residues in N-acetyl-beta-D-hexosaminides.. It catalyses the reaction N-acetyl-beta-D-galactosaminyl-(1-&gt;4)-beta-D-3-sulfogalactosyl-(1-&gt;4)-beta-D-glucosyl-(1&lt;-&gt;1')-ceramide + H2O = a beta-D-3-sulfogalactosyl-(1-&gt;4)-beta-D-glucosyl-(1&lt;-&gt;1')-ceramide + N-acetyl-beta-D-galactosamine. The enzyme catalyses a ganglioside GM2 (d18:1(4E)) + H2O = a ganglioside GM3 (d18:1(4E)) + N-acetyl-beta-D-galactosamine. It carries out the reaction a ganglioside GM2 + H2O = a ganglioside GM3 + N-acetyl-beta-D-galactosamine. The catalysed reaction is beta-D-GalNAc-(1-&gt;4)-alpha-L-IdoA-(1-&gt;3)-beta-D-GalNAc-4-sulfate-(1-&gt;4)-alpha-L-IdoA-(1-&gt;3)-D-GalNAc-4-sulfate + H2O = alpha-L-IdoA-(1-&gt;3)-beta-D-GalNAc-4-sulfate-(1-&gt;4)-alpha-L-IdoA-(1-&gt;3)-D-GalNAc-4-sulfate + N-acetyl-D-galactosamine. It catalyses the reaction N-acetyl-beta-D-6-sulfogalactosaminyl-(1-&gt;4)-alpha-L-iduronyl-(1-&gt;3)-N-acetyl-D-6-sulfogalactosamine + H2O = alpha-L-iduronyl-(1-&gt;3)-N-acetyl-D-6-sulfogalactosamine + N-acetyl-D-6-sulfogalactosamine. Addition of GM2A stimulates the hydrolysis of sulfated glycosphingolipid SM2 and the ganglioside GM2. Functionally, hydrolyzes the non-reducing end N-acetyl-D-hexosamine and/or sulfated N-acetyl-D-hexosamine of glycoconjugates, such as the oligosaccharide moieties from proteins and neutral glycolipids, or from certain mucopolysaccharides. The isozyme S is as active as the isozyme A on the anionic bis-sulfated glycans, the chondroitin-6-sulfate trisaccharide (C6S-3), and the dermatan sulfate pentasaccharide, and the sulfated glycosphingolipid SM2. The isozyme B does not hydrolyze each of these substrates, however hydrolyzes efficiently neutral oligosaccharide. Only the isozyme A is responsible for the degradation of GM2 gangliosides in the presence of GM2A. The polypeptide is Beta-hexosaminidase subunit alpha (Bos taurus (Bovine)).